The following is a 98-amino-acid chain: NADH-ubiquinone oxidoreductase chain 4L (98 aa).

Transmembrane regions (helical) follow at residues 2–22, 26–46, and 59–79; these read TSAFLNLTMAFTLSLLGTFMF, LMSTLLCLEGMMLSLFVMTST, and IPITILVFAACEAAVGLALLV.

Belongs to the complex I subunit 4L family. As to quaternary structure, core subunit of respiratory chain NADH dehydrogenase (Complex I) which is composed of 45 different subunits.

It is found in the mitochondrion inner membrane. It catalyses the reaction a ubiquinone + NADH + 5 H(+)(in) = a ubiquinol + NAD(+) + 4 H(+)(out). Its function is as follows. Core subunit of the mitochondrial membrane respiratory chain NADH dehydrogenase (Complex I) which catalyzes electron transfer from NADH through the respiratory chain, using ubiquinone as an electron acceptor. Part of the enzyme membrane arm which is embedded in the lipid bilayer and involved in proton translocation. This is NADH-ubiquinone oxidoreductase chain 4L from Rattus norvegicus (Rat).